A 338-amino-acid chain; its full sequence is CRISPR system Cmr subunit Cmr1-1 (338 aa).

The protein belongs to the CRISPR system Cmr1 family. In terms of assembly, part of the type III-B Cmr ribonucleoprotein (RNP) complex, an elongated RNP with Cmr2 and Cmr3 as the base, with Cmr4 and Cmr5 forming a helical core along the mature crRNA (39 or 45 nt in length), while the complex is capped by Cmr6 and Cmr1. The 5' end of the crRNA is bound to Cmr2 and Cmr3, while Cmr6 and a Cmr1 subunit (Cmr1-1 or Cmr1-2) cap the 3' end of the crRNA. The target RNA lies antiparallel to the crRNA, with its 5' end near Cmr1 and Cmr6 and its 3' end near Cmr2 and Cmr3; major target cleavage occurs nears the junction of Cmr1/Cmr6 and Cmr4/Cmr, with minor cleavage occurring at 6 nt intervals which coincide with the proposed spacing of Cmr4 subunits.

Its subcellular location is the cytoplasm. Its function is as follows. CRISPR (clustered regularly interspaced short palindromic repeat), is an adaptive immune system that provides protection against mobile genetic elements (viruses, transposable elements and conjugative plasmids). CRISPR clusters contain sequences complementary to antecedent mobile elements and target invading nucleic acids. CRISPR clusters are transcribed and processed into CRISPR RNA (crRNA), formerly called psiRNA (prokaryotic silencing) in this organism. Part of the Cmr ribonucleoprotein complex which has divalent cation-dependent endoribonuclease activity specific for ssRNA complementary to the crRNA (target RNA), generating 5' hydroxy- and 3' phosphate or 2'-3' cyclic phosphate termini. Cmr4 is probably the subunit that cleaves target RNA. Cmr complex does not cleave ssDNA complementary to the crRNA. Cleavage of invading RNA is guided by the crRNA; substrate cleavage occurs a fixed distance (14 nt) from the 3' end of the crRNA. In vitro reconstitution shows Cmr1-2 and Cmr5 are not absolutely necessary for target cleavage. In Pyrococcus furiosus (strain ATCC 43587 / DSM 3638 / JCM 8422 / Vc1), this protein is CRISPR system Cmr subunit Cmr1-1.